The primary structure comprises 249 residues: 3-deoxy-D-manno-octulosonic acid kinase (249 aa).

D175 is an active-site residue.

It belongs to the protein kinase superfamily. KdkA/RfaP family.

The protein resides in the cell inner membrane. It catalyses the reaction an alpha-Kdo-(2-&gt;6)-lipid IVA + ATP = a 4-O-phospho-alpha-Kdo-(2-&gt;6)-lipid IVA + ADP + H(+). It participates in bacterial outer membrane biogenesis; LPS core biosynthesis. Its function is as follows. Catalyzes the ATP-dependent phosphorylation of the 3-deoxy-D-manno-octulosonic acid (Kdo) residue in Kdo-lipid IV(A) at the 4-OH position. This Xanthomonas campestris pv. campestris (strain 8004) protein is 3-deoxy-D-manno-octulosonic acid kinase.